We begin with the raw amino-acid sequence, 394 residues long: Xylose isomerase (394 aa).

Residues His54 and Asp57 contribute to the active site. Mg(2+) contacts are provided by Glu181, Glu217, His220, Asp245, Asp255, Asp257, and Asp292.

The protein belongs to the xylose isomerase family. In terms of assembly, homotetramer. Requires Mg(2+) as cofactor.

It localises to the cytoplasm. It catalyses the reaction alpha-D-xylose = alpha-D-xylulofuranose. The polypeptide is Xylose isomerase (xylA) (Actinoplanes missouriensis (strain ATCC 14538 / DSM 43046 / CBS 188.64 / JCM 3121 / NBRC 102363 / NCIMB 12654 / NRRL B-3342 / UNCC 431)).